The sequence spans 382 residues: Alkanesulfonate monooxygenase (382 aa).

This sequence belongs to the SsuD family.

It catalyses the reaction an alkanesulfonate + FMNH2 + O2 = an aldehyde + FMN + sulfite + H2O + 2 H(+). Functionally, catalyzes the desulfonation of aliphatic sulfonates. The protein is Alkanesulfonate monooxygenase of Pseudomonas sp.